Reading from the N-terminus, the 319-residue chain is Cytochrome c biogenesis protein CcsA (319 aa).

The next 7 membrane-spanning stretches (helical) occupy residues 9-29 (ILTH…LITL), 44-64 (GVIG…AYSG), 71-91 (LYES…FPYF), 143-163 (MVLG…LLVI), 225-245 (IISL…VWAN), 259-273 (TWAF…IYLH), and 286-306 (AIVA…VNLL).

The protein belongs to the CcmF/CycK/Ccl1/NrfE/CcsA family. In terms of assembly, may interact with Ccs1.

The protein resides in the plastid. It is found in the chloroplast thylakoid membrane. In terms of biological role, required during biogenesis of c-type cytochromes (cytochrome c6 and cytochrome f) at the step of heme attachment. The chain is Cytochrome c biogenesis protein CcsA from Oenothera biennis (German evening primrose).